Here is a 599-residue protein sequence, read N- to C-terminus: Dictomallein-2 (599 aa).

The first 20 residues, 1-20, serve as a signal peptide directing secretion; it reads MKLILIYLILVFNLFNFINC. Residues 145–407 enclose the Peptidase M66 domain; it reads PDVGQDYTLK…QNYFKNSIYY (263 aa). A Zn(2+)-binding site is contributed by H298. Residue E299 is part of the active site. The Zn(2+) site is built by H302 and H308.

It belongs to the dictomallein family. The cofactor is Zn(2+).

The protein resides in the secreted. The polypeptide is Dictomallein-2 (dtmlB) (Dictyostelium discoideum (Social amoeba)).